Consider the following 147-residue polypeptide: MSTYHPKSGDITRKWYVIDATDVVLGRLATHAADLLRGKGKPLYAPNVDCGDHVIVINADKVAVTSNKREREMRYRHSGYPGGLKSMTLGRSLDLHPERTIEDSIVGMMPHNKLTAASAKKLHVFSGSEHPYAAQKPEAYEIKKVAQ.

This sequence belongs to the universal ribosomal protein uL13 family. As to quaternary structure, part of the 50S ribosomal subunit.

Its function is as follows. This protein is one of the early assembly proteins of the 50S ribosomal subunit, although it is not seen to bind rRNA by itself. It is important during the early stages of 50S assembly. The polypeptide is Large ribosomal subunit protein uL13 (Corynebacterium glutamicum (strain R)).